A 409-amino-acid polypeptide reads, in one-letter code: Arginine deiminase (409 aa).

The active-site Amidino-cysteine intermediate is the Cys398.

It belongs to the arginine deiminase family.

Its subcellular location is the cytoplasm. The catalysed reaction is L-arginine + H2O = L-citrulline + NH4(+). It functions in the pathway amino-acid degradation; L-arginine degradation via ADI pathway; carbamoyl phosphate from L-arginine: step 1/2. The chain is Arginine deiminase from Metamycoplasma arthritidis (strain 158L3-1) (Mycoplasma arthritidis).